The sequence spans 376 residues: Coatomer subunit delta-4 (376 aa).

Residues 65 to 92 (LNTDTDTFTSRPKGRTSGGTTGAGKGIG) are disordered. Gly residues predominate over residues 80–92 (TSGGTTGAGKGIG). The region spanning 134–376 (SDPVTVAVEE…RLVADNYQVV (243 aa)) is the MHD domain.

It belongs to the adaptor complexes medium subunit family. Delta-COP subfamily. As to quaternary structure, oligomeric complex that consists of at least the alpha, beta, beta', gamma, delta, epsilon and zeta subunits.

Its subcellular location is the cytoplasm. The protein localises to the golgi apparatus membrane. The protein resides in the cytoplasmic vesicle. It localises to the COPI-coated vesicle membrane. The coatomer is a cytosolic protein complex that binds to dilysine motifs and reversibly associates with Golgi non-clathrin-coated vesicles, which further mediate biosynthetic protein transport from the ER, via the Golgi up to the trans Golgi network. Coatomer complex is required for budding from Golgi membranes, and is essential for the retrograde Golgi-to-ER transport of dilysine-tagged proteins. The chain is Coatomer subunit delta-4 from Oryza sativa subsp. japonica (Rice).